The following is a 300-amino-acid chain: Tetrahydromethanopterin S-methyltransferase subunit E (300 aa).

6 helical membrane passes run 62-82, 86-106, 135-155, 158-178, 226-246, and 261-281; these read PVSY…LMGM, PILA…AYSV, PIVG…YLAV, LGNP…VGAI, YFCS…IIFL, and LITK…TTLL.

Belongs to the MtrE family. In terms of assembly, the complex is composed of 8 subunits; MtrA, MtrB, MtrC, MtrD, MtrE, MtrF, MtrG and MtrH.

It is found in the cell membrane. The catalysed reaction is 5-methyl-5,6,7,8-tetrahydromethanopterin + coenzyme M + 2 Na(+)(in) = 5,6,7,8-tetrahydromethanopterin + methyl-coenzyme M + 2 Na(+)(out). Its pathway is one-carbon metabolism; methanogenesis from CO(2); methyl-coenzyme M from 5,10-methylene-5,6,7,8-tetrahydromethanopterin: step 2/2. Its function is as follows. Part of a complex that catalyzes the formation of methyl-coenzyme M and tetrahydromethanopterin from coenzyme M and methyl-tetrahydromethanopterin. This is an energy-conserving, sodium-ion translocating step. This Methanococcus aeolicus (strain ATCC BAA-1280 / DSM 17508 / OCM 812 / Nankai-3) protein is Tetrahydromethanopterin S-methyltransferase subunit E.